Here is a 296-residue protein sequence, read N- to C-terminus: Nucleotide-binding protein str0831 (296 aa).

13-20 contributes to the ATP binding site; it reads GMSGAGKT. 63–66 is a binding site for GTP; the sequence is DMRS.

The protein belongs to the RapZ-like family.

In terms of biological role, displays ATPase and GTPase activities. This chain is Nucleotide-binding protein str0831, found in Streptococcus thermophilus (strain CNRZ 1066).